The sequence spans 28 residues: Odorant-binding protein 1 (28 aa).

It belongs to the calycin superfamily. Lipocalin family. In terms of tissue distribution, nasal mucosa.

It is found in the secreted. The protein resides in the extracellular space. In terms of biological role, this soluble protein may play a specific role in odor discrimination and perception. This is Odorant-binding protein 1 from Hystrix cristata (North African crested porcupine).